A 725-amino-acid chain; its full sequence is Eukaryotic translation initiation factor 3 subunit B (725 aa).

Residues 46 to 130 (NCVFIAGIPV…HTFTARSFKD (85 aa)) enclose the RRM domain. WD repeat units follow at residues 202 to 240 (RANWTETVFTWSPHGSYLSTIHKQGIILWGGKDYARAHR), 242 to 280 (AHTNVQYIDFSPCETYLVTYAAPEESNSWGDCEKDSLRI), 354 to 395 (VNIE…SMQR), 462 to 504 (PLSE…HAPK), 510 to 552 (DAGV…AKRT), and 554 to 594 (VIEH…FTFQ).

The protein belongs to the eIF-3 subunit B family. As to quaternary structure, component of the eukaryotic translation initiation factor 3 (eIF-3) complex.

The protein localises to the cytoplasm. RNA-binding component of the eukaryotic translation initiation factor 3 (eIF-3) complex, which is involved in protein synthesis of a specialized repertoire of mRNAs and, together with other initiation factors, stimulates binding of mRNA and methionyl-tRNAi to the 40S ribosome. The eIF-3 complex specifically targets and initiates translation of a subset of mRNAs involved in cell proliferation. In Caenorhabditis elegans, this protein is Eukaryotic translation initiation factor 3 subunit B.